Reading from the N-terminus, the 272-residue chain is Lyso-glycine lipid O-acyltransferase (272 aa).

It belongs to the O-acyltransferase GlsA family.

The catalysed reaction is a lyso-glycine lipid + a fatty acyl-[ACP] = a glycine lipid + holo-[ACP]. It carries out the reaction N-[(3R)-3-hydroxyhexadecanoyl]-glycine + hexadecanoyl-[ACP] = N-[(3R)-3-(hexadecanoyloxy)hexadecanoyl]-glycine + holo-[ACP]. It participates in lipid metabolism. Functionally, is involved in the production of glycine lipids (GL), which are phosphorus-free membrane lipids important for fitness during growth of the human gut bacterium B.thetaiotaomicron in vivo and in vitro. Catalyzes the second step of GL biosynthesis, i.e. the O-acylation of the hydroxyl group of lyso-glycine lipids, resulting in the production of the mature diacylated glycine lipids. The chain is Lyso-glycine lipid O-acyltransferase from Bacteroides thetaiotaomicron (strain ATCC 29148 / DSM 2079 / JCM 5827 / CCUG 10774 / NCTC 10582 / VPI-5482 / E50).